Reading from the N-terminus, the 513-residue chain is MQLNPSEISDLIKTRIEGLKAGADAKNTGTVISVTDGICRIHGLSGVMQGEMLEFPGNTFGLALNLERDSVGAVVLGDYEHISEGNEVKCTGRILEVPVGPELLGRVVNALGQPIDGKGPINAKKTDVIEKVAPGVIARQSVSQPVQTGLKSIDAMVPIGRGQRELIIGDRQTGKTAVAVDAIINQKGKGIFCVYVAIGQKASTIANVVRKLEEHGALEYTIVVAAAASDSAAMQYLSAYAGCTMGEYFRDRGEDALIVYDDLTKQAWAYRQVSLLLRRPPGREAYPGDVFYLHSRLLERAARVNAEHIEKITNGEVKGKTGSLTALPVIETQAGDVSAFVPTNVISITDGQIFLETDLFNAGIRPAINAGISVSRVGGAAQTKVVKKLSGGIRTDLAQYRELAAFAQFASDLDEATRKQLERGRRVTELLKQPQYQPLQVWQLAASLYAANNGFLDNVDVKDILAFEKGLHDQLKTKYADLINRIEDTKDLSKDDEAALRAAIEDFKKSAAF.

169–176 (GDRQTGKT) serves as a coordination point for ATP.

It belongs to the ATPase alpha/beta chains family. As to quaternary structure, F-type ATPases have 2 components, CF(1) - the catalytic core - and CF(0) - the membrane proton channel. CF(1) has five subunits: alpha(3), beta(3), gamma(1), delta(1), epsilon(1). CF(0) has three main subunits: a(1), b(2) and c(9-12). The alpha and beta chains form an alternating ring which encloses part of the gamma chain. CF(1) is attached to CF(0) by a central stalk formed by the gamma and epsilon chains, while a peripheral stalk is formed by the delta and b chains.

Its subcellular location is the cell inner membrane. The catalysed reaction is ATP + H2O + 4 H(+)(in) = ADP + phosphate + 5 H(+)(out). Functionally, produces ATP from ADP in the presence of a proton gradient across the membrane. The alpha chain is a regulatory subunit. This is ATP synthase subunit alpha from Ralstonia nicotianae (strain ATCC BAA-1114 / GMI1000) (Ralstonia solanacearum).